A 200-amino-acid chain; its full sequence is Cysteine dioxygenase type 1 (200 aa).

The Fe cation site is built by histidine 86, histidine 88, and histidine 140. A cross-link (3'-(S-cysteinyl)-tyrosine (Cys-Tyr)) is located at residues 93 to 157; the sequence is CFLKLLQGNL…TEPAVSLHLY (65 aa).

This sequence belongs to the cysteine dioxygenase family. As to quaternary structure, monomer. It depends on Fe(2+) as a cofactor. Ni(2+) is required as a cofactor. The cofactor is Zn(2+). Post-translationally, the thioether cross-link between Cys-93 and Tyr-157 plays a structural role through stabilizing the Fe(2+) ion, and prevents the production of highly damaging free hydroxyl radicals by holding the oxygen radical via hydroxyl hydrogen. As to expression, highest expression in liver. Also expressed in kidney, lung, brain and small intestine.

It carries out the reaction L-cysteine + O2 = 3-sulfino-L-alanine + H(+). Its pathway is organosulfur biosynthesis; taurine biosynthesis; hypotaurine from L-cysteine: step 1/2. Its function is as follows. Catalyzes the oxidation of cysteine to cysteine sulfinic acid with addition of molecular dioxygen. This Mus musculus (Mouse) protein is Cysteine dioxygenase type 1 (Cdo1).